Reading from the N-terminus, the 148-residue chain is Globin, monomeric component M-IV (148 aa).

In terms of domain architecture, Globin spans 2–147 (GLSAAQRQVV…ISGALISGLQ (146 aa)). His91 serves as a coordination point for heme b.

Monomer.

The chain is Globin, monomeric component M-IV from Glycera dibranchiata (Bloodworm).